The sequence spans 337 residues: D-alanine--D-alanine ligase (337 aa).

Residues Lys126–Ser326 enclose the ATP-grasp domain. Residue Val152–Thr207 coordinates ATP. Residues Asp279, Glu293, and Asn295 each contribute to the Mg(2+) site.

The protein belongs to the D-alanine--D-alanine ligase family. Mg(2+) serves as cofactor. The cofactor is Mn(2+).

It localises to the cytoplasm. It carries out the reaction 2 D-alanine + ATP = D-alanyl-D-alanine + ADP + phosphate + H(+). It functions in the pathway cell wall biogenesis; peptidoglycan biosynthesis. Functionally, cell wall formation. The protein is D-alanine--D-alanine ligase of Polynucleobacter asymbioticus (strain DSM 18221 / CIP 109841 / QLW-P1DMWA-1) (Polynucleobacter necessarius subsp. asymbioticus).